The primary structure comprises 540 residues: MAKDIKFSADARSAMVRGVDILADTVKVTLGPKGRNVVLEKSFGSPLITNDGVTIAKEIELEDHFENMGAKLVSEVASKTNDIAGDGTTTATVLTQAIVREGIKNVTAGANPIGIRRGIETAVATAVEALKANSVPVSNKEAIAQVAAVSSRSEKVGEYISEAMEKVGNDGVITIEESKGMETELDVVEGMQFDRGYLSQYMVTDNEKMVADLDNPYILITDKKISNIQEILPLLENILKTSRPLLIIADDVDGEALPTLVLNKIRGTFNVVAVKAPGFGDRRKAMLEDIAILTGGTVITEDLGLELKDATIEALGQASKVTVDKDSTVIVEGSGAAEAIANRVAVIKSQIESATSEFDKEKLQERLAKLSGGVAVIKVGAATETELKEMKLRIEDALNATRAAVEEGIVSGGGTAFVNVLNTVEALDLSGDEATGRNIVLRALEEPIRQIAINAGFEGSIVIDRLKNSEVGTGFNAATGEWVDMIEAGIIDPVKVTRSALQNAASVASLILTTEAVVASQPEPASPAPAMDPSMMGGMM.

ATP contacts are provided by residues 29–32, 86–90, Gly-413, 476–478, and Asp-492; these read TLGP, DGTTT, and NAA.

Belongs to the chaperonin (HSP60) family. As to quaternary structure, forms a cylinder of 14 subunits composed of two heptameric rings stacked back-to-back. Interacts with the co-chaperonin GroES.

The protein resides in the cytoplasm. It catalyses the reaction ATP + H2O + a folded polypeptide = ADP + phosphate + an unfolded polypeptide.. Functionally, together with its co-chaperonin GroES, plays an essential role in assisting protein folding. The GroEL-GroES system forms a nano-cage that allows encapsulation of the non-native substrate proteins and provides a physical environment optimized to promote and accelerate protein folding. The chain is Chaperonin GroEL from Streptococcus constellatus.